Reading from the N-terminus, the 2890-residue chain is Bifunctional DNA-directed RNA polymerase subunit beta-beta' (2890 aa).

The interval 1-1377 (MSKKIPLKNR…DINIFGDDVD (1377 aa)) is DNA-directed RNA polymerase subunit beta. A DNA-directed RNA polymerase subunit beta' region spans residues 1384 to 2890 (PIVIKEDDRP…LRTLEDDPKF (1507 aa)). The Zn(2+) site is built by Cys-1449, Cys-1451, Cys-1465, and Cys-1468. Residues Asp-1849, Asp-1851, and Asp-1853 each coordinate Mg(2+). Zn(2+) is bound by residues Cys-2179, Cys-2253, Cys-2260, and Cys-2263.

The protein in the N-terminal section; belongs to the RNA polymerase beta chain family. This sequence in the C-terminal section; belongs to the RNA polymerase beta' chain family. As to quaternary structure, the RNAP catalytic core consists of 2 alpha, 1 beta/beta' and 1 omega subunit. When a sigma factor is associated with the core the holoenzyme is formed, which can initiate transcription. The cofactor is Mg(2+). Requires Zn(2+) as cofactor.

It catalyses the reaction RNA(n) + a ribonucleoside 5'-triphosphate = RNA(n+1) + diphosphate. In terms of biological role, DNA-dependent RNA polymerase catalyzes the transcription of DNA into RNA using the four ribonucleoside triphosphates as substrates. The protein is Bifunctional DNA-directed RNA polymerase subunit beta-beta' (rpoBC) of Helicobacter pylori (strain Shi470).